The primary structure comprises 314 residues: Probable 2-(5''-triphosphoribosyl)-3'-dephosphocoenzyme-A synthase (314 aa).

Belongs to the CitG/MdcB family.

The enzyme catalyses 3'-dephospho-CoA + ATP = 2'-(5''-triphospho-alpha-D-ribosyl)-3'-dephospho-CoA + adenine. The chain is Probable 2-(5''-triphosphoribosyl)-3'-dephosphocoenzyme-A synthase from Photobacterium profundum (strain SS9).